Reading from the N-terminus, the 69-residue chain is DNA-directed RNA polymerase subunit omega (69 aa).

Belongs to the RNA polymerase subunit omega family. The RNAP catalytic core consists of 2 alpha, 1 beta, 1 beta' and 1 omega subunit. When a sigma factor is associated with the core the holoenzyme is formed, which can initiate transcription.

It carries out the reaction RNA(n) + a ribonucleoside 5'-triphosphate = RNA(n+1) + diphosphate. In terms of biological role, promotes RNA polymerase assembly. Latches the N- and C-terminal regions of the beta' subunit thereby facilitating its interaction with the beta and alpha subunits. This is DNA-directed RNA polymerase subunit omega from Pediococcus pentosaceus (strain ATCC 25745 / CCUG 21536 / LMG 10740 / 183-1w).